Consider the following 65-residue polypeptide: Myotoxin-1 (65 aa).

Positions 1 to 22 are cleaved as a signal peptide; that stretch reads MKILYLLFAFLFLAFLSEPGNA. Cystine bridges form between cysteine 26–cysteine 58, cysteine 33–cysteine 52, and cysteine 40–cysteine 59.

The protein belongs to the crotamine-myotoxin family. In terms of assembly, monomer. In terms of tissue distribution, expressed by the venom gland.

It is found in the secreted. In terms of biological role, cationic peptide that possesses multiple functions. It acts as a cell-penetrating peptide (CPP), and as a potent voltage-gated potassium channel (Kv) inhibitor. It exhibits antimicrobial activities, hind limb paralysis, and severe muscle necrosis by a non-enzymatic mechanism. The chain is Myotoxin-1 from Crotalus durissus terrificus (South American rattlesnake).